Here is a 300-residue protein sequence, read N- to C-terminus: Acetylglutamate kinase (300 aa).

Residues glycine 73 to glycine 74, arginine 95, and asparagine 197 each bind substrate.

Belongs to the acetylglutamate kinase family. ArgB subfamily.

The protein resides in the cytoplasm. The enzyme catalyses N-acetyl-L-glutamate + ATP = N-acetyl-L-glutamyl 5-phosphate + ADP. The protein operates within amino-acid biosynthesis; L-arginine biosynthesis; N(2)-acetyl-L-ornithine from L-glutamate: step 2/4. Its function is as follows. Catalyzes the ATP-dependent phosphorylation of N-acetyl-L-glutamate. This is Acetylglutamate kinase from Bordetella bronchiseptica (strain ATCC BAA-588 / NCTC 13252 / RB50) (Alcaligenes bronchisepticus).